Here is a 239-residue protein sequence, read N- to C-terminus: Peptidase E (239 aa).

Residues S122, D137, and H159 each act as charge relay system in the active site.

It belongs to the peptidase S51 family.

It localises to the cytoplasm. It carries out the reaction Dipeptidase E catalyzes the hydrolysis of dipeptides Asp-|-Xaa. It does not act on peptides with N-terminal Glu, Asn or Gln, nor does it cleave isoaspartyl peptides.. Hydrolyzes dipeptides containing N-terminal aspartate residues. May play a role in allowing the cell to use peptide aspartate to spare carbon otherwise required for the synthesis of the aspartate family of amino acids. The polypeptide is Peptidase E (Shewanella baltica (strain OS195)).